The sequence spans 195 residues: Interferon omega-1 (195 aa).

A signal peptide spans 1-23 (MAFSVSSLMALVVISSSPVSSMS). Disulfide bonds link cysteine 24–cysteine 122 and cysteine 52–cysteine 162. Asparagine 101 is a glycosylation site (N-linked (GlcNAc...) asparagine).

It belongs to the alpha/beta interferon family.

It is found in the secreted. The sequence is that of Interferon omega-1 from Equus caballus (Horse).